Reading from the N-terminus, the 449-residue chain is Elongation factor 1-alpha 1 (449 aa).

The tr-type G domain maps to 5–230 (KVHMNLVVVG…DMLEPPVRPS (226 aa)). Residues 14–21 (GHVDAGKS) are G1. Position 14 to 21 (14 to 21 (GHVDAGKS)) interacts with GTP. The interval 70 to 74 (GITID) is G2. Residues 91-94 (DAPG) form a G3 region. GTP contacts are provided by residues 91–95 (DAPGH) and 153–156 (NKMD). Residues 153–156 (NKMD) form a G4 region. The tract at residues 194-196 (SGW) is G5. Glu-362 carries the 5-glutamyl glycerylphosphorylethanolamine modification.

The protein belongs to the TRAFAC class translation factor GTPase superfamily. Classic translation factor GTPase family. EF-Tu/EF-1A subfamily. Phosphatidylethanolamine (PE) is a direct precursor of the ethanolamine-phosphoglycerol (EPG) moiety.

Its subcellular location is the cytoplasm. In terms of biological role, this protein promotes the GTP-dependent binding of aminoacyl-tRNA to the A-site of ribosomes during protein biosynthesis. The sequence is that of Elongation factor 1-alpha 1 (TEF1) from Trypanosoma brucei brucei (strain 927/4 GUTat10.1).